The primary structure comprises 185 residues: Ribosome-recycling factor (185 aa).

It belongs to the RRF family.

It is found in the cytoplasm. Functionally, responsible for the release of ribosomes from messenger RNA at the termination of protein biosynthesis. May increase the efficiency of translation by recycling ribosomes from one round of translation to another. The protein is Ribosome-recycling factor of Halorhodospira halophila (strain DSM 244 / SL1) (Ectothiorhodospira halophila (strain DSM 244 / SL1)).